The sequence spans 194 residues: Peptidyl-tRNA hydrolase (194 aa).

Y17 provides a ligand contact to tRNA. The active-site Proton acceptor is the H22. Y68, N70, and N116 together coordinate tRNA.

Belongs to the PTH family. In terms of assembly, monomer.

Its subcellular location is the cytoplasm. The enzyme catalyses an N-acyl-L-alpha-aminoacyl-tRNA + H2O = an N-acyl-L-amino acid + a tRNA + H(+). Its function is as follows. Hydrolyzes ribosome-free peptidyl-tRNAs (with 1 or more amino acids incorporated), which drop off the ribosome during protein synthesis, or as a result of ribosome stalling. Catalyzes the release of premature peptidyl moieties from peptidyl-tRNA molecules trapped in stalled 50S ribosomal subunits, and thus maintains levels of free tRNAs and 50S ribosomes. The protein is Peptidyl-tRNA hydrolase of Pseudomonas aeruginosa (strain LESB58).